A 594-amino-acid polypeptide reads, in one-letter code: Chondroitin sulfate proteoglycan 5 (594 aa).

A compositionally biased stretch (polar residues) spans 1 to 12; it reads MGVGGTSASDTA. The first 18 residues, 1 to 18, serve as a signal peptide directing secretion; it reads MGVGGTSASDTALSLCPT. Disordered stretches follow at residues 1–325 and 343–418; these read MGVG…PWGL and TTSF…SECR. The Extracellular portion of the chain corresponds to 19–481; it reads APEWPPRNGS…AIVTDFQVLC (463 aa). N26 and N44 each carry an N-linked (GlcNAc...) asparagine glycan. Residues 140-181 show a composition bias toward low complexity; sequence SPGLGLSSPGPNLGLPSLDLPNPNLGLPDPNLGLPNPSLGLP. Pro residues-rich tracts occupy residues 182–195 and 219–229; these read SPGPTPDRPIPNPN and IPLPSPSPGPG. Residues 248-259 are compositionally biased toward low complexity; the sequence is PQPSSSPAPAQR. Residues 298-310 are compositionally biased toward gly residues; it reads GGHGPGGGHGAGG. The interval 338-377 is interaction with TNC and TNR; it reads ADFYPTTSFYAEGDDDAEEELEEDEEEEEEEDGGLEDENG. Residues 349–375 show a composition bias toward acidic residues; the sequence is EGDDDAEEELEEDEEEEEEEDGGLEDE. N-linked (GlcNAc...) asparagine glycans are attached at residues N413 and N425. The 43-residue stretch at 429 to 471 folds into the EGF-like domain; sequence RSVCDLVPSYCHNGGQCYLVESHGAFCRCNTQDYTWHKGTRCE. 3 disulfide bridges follow: C432–C445, C439–C455, and C457–C470. A helical transmembrane segment spans residues 482 to 502; the sequence is VAVGSAALVLLLLFMLTVFFA. Over 503–594 the chain is Cytoplasmic; it reads KKLYLLKTEN…GVPCLHNNLG (92 aa). The interval 535-594 is disordered; it reads TIAEGSHPNDDPGAPHKLQDPLKPGLKDEEPLSILSTAPEEGSKGEPGGCGVPCLHNNLG. The segment covering 541–564 has biased composition (basic and acidic residues); that stretch reads HPNDDPGAPHKLQDPLKPGLKDEE.

As to quaternary structure, binds TNC and TNR. The 80 kDa form but not the 140 kDa form can bind TNC and TNR when expressed at the cell surface. Different forms exist: the 140 kDa form (also reported as 130 kDa), which probably consists of the entire protein, and the 38 and 80 kDa forms, which are probably cleaved in their N-terminus. Increase in synaptic activity, results in shedding of the extracellular domain and expression at the cell surface of a 38 kDa form. A form of 200 kDa has also been reported, which is probably hyperglycosylated. Post-translationally, N-glycosylated. In terms of processing, O-glycosylated; contains chondroitin sulfate glycans. Part-time proteoglycan, the 200 kDa form is the only one containing chondroitin sulfate glycans. Expressed in astroglial and neuronal surfaces in different parts of the embryonic brain. Expressed in adult brain and retina (at protein level).

It is found in the cell membrane. Functionally, may function as a growth and differentiation factor involved in neuritogenesis and more particularly in neurite extension. This Gallus gallus (Chicken) protein is Chondroitin sulfate proteoglycan 5 (CSPG5).